The chain runs to 1055 residues: Error-prone DNA polymerase (1055 aa).

It belongs to the DNA polymerase type-C family. DnaE2 subfamily.

The protein localises to the cytoplasm. The enzyme catalyses DNA(n) + a 2'-deoxyribonucleoside 5'-triphosphate = DNA(n+1) + diphosphate. Its function is as follows. DNA polymerase involved in damage-induced mutagenesis and translesion synthesis (TLS). It is not the major replicative DNA polymerase. In Corynebacterium glutamicum (strain ATCC 13032 / DSM 20300 / JCM 1318 / BCRC 11384 / CCUG 27702 / LMG 3730 / NBRC 12168 / NCIMB 10025 / NRRL B-2784 / 534), this protein is Error-prone DNA polymerase.